The following is a 515-amino-acid chain: Bifunctional purine biosynthesis protein PurH (515 aa).

Residues 1–145 (MTKRVLISVS…KNHASVTVVV (145 aa)) enclose the MGS-like domain.

Belongs to the PurH family.

The enzyme catalyses (6R)-10-formyltetrahydrofolate + 5-amino-1-(5-phospho-beta-D-ribosyl)imidazole-4-carboxamide = 5-formamido-1-(5-phospho-D-ribosyl)imidazole-4-carboxamide + (6S)-5,6,7,8-tetrahydrofolate. It carries out the reaction IMP + H2O = 5-formamido-1-(5-phospho-D-ribosyl)imidazole-4-carboxamide. It functions in the pathway purine metabolism; IMP biosynthesis via de novo pathway; 5-formamido-1-(5-phospho-D-ribosyl)imidazole-4-carboxamide from 5-amino-1-(5-phospho-D-ribosyl)imidazole-4-carboxamide (10-formyl THF route): step 1/1. Its pathway is purine metabolism; IMP biosynthesis via de novo pathway; IMP from 5-formamido-1-(5-phospho-D-ribosyl)imidazole-4-carboxamide: step 1/1. In Streptococcus pneumoniae (strain 70585), this protein is Bifunctional purine biosynthesis protein PurH.